A 92-amino-acid polypeptide reads, in one-letter code: Islet amyloid polypeptide (92 aa).

The signal sequence occupies residues 1 to 22 (MCLLRLPVTLLVLCVALNELKA). A propeptide spanning residues 23–34 (TSIASDTGHQVG) is cleaved from the precursor. Cys-38 and Cys-43 are disulfide-bonded. Tyr-73 carries the post-translational modification Tyrosine amide. Residues 77–92 (NAPQISDRELLHYLPL) constitute a propeptide that is removed on maturation.

This sequence belongs to the calcitonin family. Can form homodimers. Interacts with IDE and INS. Interaction with INS inhibits homodimerization and fibril formation.

Its subcellular location is the secreted. Its function is as follows. Amylin/IAPP is a glucoregulatory peptide hormone that plays an important role in the regulation of energy homeostasis. Selectively inhibits insulin-stimulated glucose utilization and glycogen deposition in muscle, while not affecting adipocyte glucose metabolism. IAPP function is mediated by the CALCR-RAMPs (AMYRs) receptor complexes. Amylin can also bind CALCR receptor in the absence of RAMPs, although it is more selective for AMYRs. This Cavia porcellus (Guinea pig) protein is Islet amyloid polypeptide (IAPP).